The sequence spans 360 residues: Peptide chain release factor 1 (360 aa).

Q235 is modified (N5-methylglutamine). Basic and acidic residues predominate over residues 283–293; it reads EREAQAKEASA. The tract at residues 283 to 305 is disordered; it reads EREAQAKEASARKSLIGSGDRSD.

Belongs to the prokaryotic/mitochondrial release factor family. Methylated by PrmC. Methylation increases the termination efficiency of RF1.

It localises to the cytoplasm. In terms of biological role, peptide chain release factor 1 directs the termination of translation in response to the peptide chain termination codons UAG and UAA. The polypeptide is Peptide chain release factor 1 (Ralstonia pickettii (strain 12J)).